Consider the following 620-residue polypeptide: 1-deoxy-D-xylulose-5-phosphate synthase (620 aa).

Residues His80 and 121–123 contribute to the thiamine diphosphate site; that span reads GHS. Asp152 contributes to the Mg(2+) binding site. Residues 153 to 154, Asn181, Tyr288, and Glu370 each bind thiamine diphosphate; that span reads GA. Residue Asn181 participates in Mg(2+) binding.

The protein belongs to the transketolase family. DXPS subfamily. As to quaternary structure, homodimer. Mg(2+) serves as cofactor. The cofactor is thiamine diphosphate.

The catalysed reaction is D-glyceraldehyde 3-phosphate + pyruvate + H(+) = 1-deoxy-D-xylulose 5-phosphate + CO2. It participates in metabolic intermediate biosynthesis; 1-deoxy-D-xylulose 5-phosphate biosynthesis; 1-deoxy-D-xylulose 5-phosphate from D-glyceraldehyde 3-phosphate and pyruvate: step 1/1. Functionally, catalyzes the acyloin condensation reaction between C atoms 2 and 3 of pyruvate and glyceraldehyde 3-phosphate to yield 1-deoxy-D-xylulose-5-phosphate (DXP). The polypeptide is 1-deoxy-D-xylulose-5-phosphate synthase (Shigella boydii serotype 18 (strain CDC 3083-94 / BS512)).